The following is a 298-amino-acid chain: Mitochondrial 2-oxodicarboxylate carrier (298 aa).

Solcar repeat units follow at residues 10 to 99 (HETC…YKKF), 106 to 195 (SPGL…VKDN), and 204 to 293 (LEFL…TYAW). Transmembrane regions (helical) follow at residues 16–36 (VAAGGCAGLVEICLMHPLDVV), 69–88 (FGFYKGIIPPILAETPKRAV), 112–132 (PIAGLGSGLTEAVVVNPFEVV), 166–186 (GLNKGFTATLGRHGIFNMTYF), 204–224 (LEFLRKFGIGFVSGTVGSVFN), and 276–296 (LGPGGGVMLLVYEYTYAWLQE).

Belongs to the mitochondrial carrier (TC 2.A.29) family. Widely expressed.

It localises to the mitochondrion inner membrane. The enzyme catalyses 2-oxoadipate(in) + 2-oxoglutarate(out) = 2-oxoadipate(out) + 2-oxoglutarate(in). It catalyses the reaction hexanedioate(in) + 2-oxoglutarate(out) = hexanedioate(out) + 2-oxoglutarate(in). The catalysed reaction is L-2-aminoadipate(in) + 2-oxoglutarate(out) = L-2-aminoadipate(out) + 2-oxoglutarate(in). It carries out the reaction glutarate(in) + 2-oxoglutarate(out) = glutarate(out) + 2-oxoglutarate(in). The enzyme catalyses 2-oxoheptanedioate(in) + 2-oxoglutarate(out) = 2-oxoheptanedioate(out) + 2-oxoglutarate(in). It catalyses the reaction heptanedioate(in) + 2-oxoglutarate(out) = heptanedioate(out) + 2-oxoglutarate(in). The catalysed reaction is citrate(in) + 2-oxoglutarate(out) = citrate(out) + 2-oxoglutarate(in). Transports dicarboxylates across the inner membranes of mitochondria by a counter-exchange mechanism. Can transport 2-oxoadipate (2-oxohexanedioate), 2-oxoglutarate, adipate (hexanedioate), glutarate, and to a lesser extent, pimelate (heptanedioate), 2-oxopimelate (2-oxoheptanedioate), 2-aminoadipate (2-aminohexanedioate), oxaloacetate, and citrate. Plays a central role in catabolism of lysine, hydroxylysine, and tryptophan, by transporting common metabolite intermediates (such as 2-oxoadipate) into the mitochondria, where it is converted into acetyl-CoA and can enter the citric acid (TCA) cycle. The sequence is that of Mitochondrial 2-oxodicarboxylate carrier (Slc25a21) from Rattus norvegicus (Rat).